A 427-amino-acid polypeptide reads, in one-letter code: Gamma-glutamyl phosphate reductase (427 aa).

The protein belongs to the gamma-glutamyl phosphate reductase family.

Its subcellular location is the cytoplasm. The catalysed reaction is L-glutamate 5-semialdehyde + phosphate + NADP(+) = L-glutamyl 5-phosphate + NADPH + H(+). Its pathway is amino-acid biosynthesis; L-proline biosynthesis; L-glutamate 5-semialdehyde from L-glutamate: step 2/2. In terms of biological role, catalyzes the NADPH-dependent reduction of L-glutamate 5-phosphate into L-glutamate 5-semialdehyde and phosphate. The product spontaneously undergoes cyclization to form 1-pyrroline-5-carboxylate. This is Gamma-glutamyl phosphate reductase from Allorhizobium ampelinum (strain ATCC BAA-846 / DSM 112012 / S4) (Agrobacterium vitis (strain S4)).